The chain runs to 246 residues: tRNA (guanine-N(1)-)-methyltransferase (246 aa).

Residues glycine 117 and 137–142 (IGDYVL) each bind S-adenosyl-L-methionine.

Belongs to the RNA methyltransferase TrmD family. Homodimer.

It localises to the cytoplasm. It carries out the reaction guanosine(37) in tRNA + S-adenosyl-L-methionine = N(1)-methylguanosine(37) in tRNA + S-adenosyl-L-homocysteine + H(+). Its function is as follows. Specifically methylates guanosine-37 in various tRNAs. The polypeptide is tRNA (guanine-N(1)-)-methyltransferase (Acinetobacter baumannii (strain SDF)).